The chain runs to 426 residues: Gamma-glutamyl phosphate reductase (426 aa).

The protein belongs to the gamma-glutamyl phosphate reductase family.

The protein resides in the cytoplasm. It catalyses the reaction L-glutamate 5-semialdehyde + phosphate + NADP(+) = L-glutamyl 5-phosphate + NADPH + H(+). It participates in amino-acid biosynthesis; L-proline biosynthesis; L-glutamate 5-semialdehyde from L-glutamate: step 2/2. Catalyzes the NADPH-dependent reduction of L-glutamate 5-phosphate into L-glutamate 5-semialdehyde and phosphate. The product spontaneously undergoes cyclization to form 1-pyrroline-5-carboxylate. This chain is Gamma-glutamyl phosphate reductase, found in Deinococcus geothermalis (strain DSM 11300 / CIP 105573 / AG-3a).